Reading from the N-terminus, the 614-residue chain is Afadin- and alpha-actinin-binding protein (614 aa).

Coiled-coil stretches lie at residues 131–227 (MDHL…IAMD) and 266–293 (RQKQ…SLLS). A phosphoserine mark is found at serine 290, serine 293, and serine 312. A disordered region spans residues 292–317 (LSPQKKKPRERVDDSTGTVISDVEED). Positions 374 to 460 (ISRQDHEQET…RSFTEAAIRL (87 aa)) form a coiled coil. Phosphoserine occurs at positions 536, 540, and 542.

This sequence belongs to the ADIP family. As to quaternary structure, interacts with afadin and alpha-actinin. Interacts with VAV2. Interacts with SSX2 and SSX3. Does not interact with SSX1 and SSX4. Interacts with PCM1. Interacts with WRAP73. Widely expressed, with the highest expression in brain, intermediate expression in kidney, testis, spinal cord, liver, heart, lung, skeletal muscle, ovary, fetal liver and fetal brain, and little to no expression in pancreas and spleen. All specific brain regions showed intermediate to high expression, with highest expression in amygdala. Also expressed in fetal tissues, mainly in liver and brain.

Its subcellular location is the cell junction. The protein localises to the adherens junction. It is found in the nucleus. It localises to the cytoplasm. The protein resides in the cytoskeleton. Its subcellular location is the microtubule organizing center. The protein localises to the centrosome. It is found in the centriolar satellite. It localises to the cilium basal body. Belongs to an adhesion system, which plays a role in the organization of homotypic, interneuronal and heterotypic cell-cell adherens junctions (AJs). May connect the nectin-afadin and E-cadherin-catenin system through alpha-actinin and may be involved in organization of the actin cytoskeleton at AJs through afadin and alpha-actinin. Involved in cell movement: localizes at the leading edge of moving cells in response to PDGF and is required for the formation of the leading edge and the promotion of cell movement, possibly via activation of Rac signaling. Acts as a centrosome maturation factor, probably by maintaining the integrity of the pericentriolar material and proper microtubule nucleation at mitotic spindle poles. The function seems to implicate at least in part WRAP73; the SSX2IP:WRAP73 complex is proposed to act as regulator of spindle anchoring at the mitotic centrosome. Involved in ciliogenesis. It is required for targeted recruitment of the BBSome, CEP290, RAB8, and SSTR3 to the cilia. This is Afadin- and alpha-actinin-binding protein (SSX2IP) from Homo sapiens (Human).